Reading from the N-terminus, the 438-residue chain is Diaminopimelate decarboxylase (438 aa).

An N6-(pyridoxal phosphate)lysine modification is found at lysine 73. Pyridoxal 5'-phosphate contacts are provided by residues serine 217, glycine 254, and 294–297 (EPGR). 3 residues coordinate substrate: arginine 297, arginine 333, and tyrosine 337. The active-site Proton donor is the cysteine 362. 2 residues coordinate substrate: glutamate 363 and tyrosine 391. Tyrosine 391 contributes to the pyridoxal 5'-phosphate binding site.

It belongs to the Orn/Lys/Arg decarboxylase class-II family. LysA subfamily. Homodimer. Pyridoxal 5'-phosphate is required as a cofactor.

The enzyme catalyses meso-2,6-diaminopimelate + H(+) = L-lysine + CO2. It participates in amino-acid biosynthesis; L-lysine biosynthesis via DAP pathway; L-lysine from DL-2,6-diaminopimelate: step 1/1. Its activity is regulated as follows. Competitively inhibited by the substrate analog azelaic acid in vitro but not in vivo. Specifically catalyzes the decarboxylation of meso-diaminopimelate (meso-DAP) to L-lysine. This chain is Diaminopimelate decarboxylase, found in Methanocaldococcus jannaschii (strain ATCC 43067 / DSM 2661 / JAL-1 / JCM 10045 / NBRC 100440) (Methanococcus jannaschii).